Consider the following 498-residue polypeptide: ATP synthase subunit beta, chloroplastic (498 aa).

T6 bears the Phosphothreonine mark. Phosphoserine is present on S13. Residue 172–179 (GGAGVGKT) coordinates ATP.

Belongs to the ATPase alpha/beta chains family. F-type ATPases have 2 components, CF(1) - the catalytic core - and CF(0) - the membrane proton channel. CF(1) has five subunits: alpha(3), beta(3), gamma(1), delta(1), epsilon(1). CF(0) has four main subunits: a(1), b(1), b'(1) and c(9-12).

It localises to the plastid. The protein localises to the chloroplast thylakoid membrane. It carries out the reaction ATP + H2O + 4 H(+)(in) = ADP + phosphate + 5 H(+)(out). Produces ATP from ADP in the presence of a proton gradient across the membrane. The catalytic sites are hosted primarily by the beta subunits. In Arabis hirsuta (Hairy rock-cress), this protein is ATP synthase subunit beta, chloroplastic.